A 241-amino-acid chain; its full sequence is DNA repair protein RecO (241 aa).

The protein belongs to the RecO family.

Involved in DNA repair and RecF pathway recombination. In Azobacteroides pseudotrichonymphae genomovar. CFP2, this protein is DNA repair protein RecO.